An 831-amino-acid chain; its full sequence is Probable glucan 1,3-beta-glucosidase D (831 aa).

Basic and acidic residues-rich tracts occupy residues 1–24 (MPSH…YREV), 44–56 (RRDD…RSHE), 79–93 (RSHD…RSRA), 102–115 (SRRD…EYRR), 137–151 (RDGQ…DREA), and 198–213 (QRER…MESK). Disordered stretches follow at residues 1 to 179 (MPSH…SGSH) and 192 to 241 (HYDE…GQSK). Residues 1-297 (MPSHSRSRDR…AQPPFWKRKK (297 aa)) lie on the Cytoplasmic side of the membrane. The helical; Signal-anchor for type II membrane protein transmembrane segment at 298-318 (WWIVIGVLVVVLAIVIPVAVV) threads the bilayer. The Extracellular segment spans residues 319–831 (MSKKHGHDDD…PSFGDLPEYY (513 aa)). Residues asparagine 376, asparagine 381, asparagine 393, asparagine 410, asparagine 442, asparagine 546, and asparagine 558 are each glycosylated (N-linked (GlcNAc...) asparagine). Glutamate 597 acts as the Proton donor in catalysis. 4 N-linked (GlcNAc...) asparagine glycosylation sites follow: asparagine 610, asparagine 636, asparagine 669, and asparagine 689. Residue glutamate 702 is the Nucleophile of the active site.

The protein belongs to the glycosyl hydrolase 5 (cellulase A) family.

It is found in the cell membrane. It carries out the reaction Successive hydrolysis of beta-D-glucose units from the non-reducing ends of (1-&gt;3)-beta-D-glucans, releasing alpha-glucose.. Functionally, glucosidase involved in the degradation of cellulosic biomass. Active on lichenan. This is Probable glucan 1,3-beta-glucosidase D (exgD) from Aspergillus oryzae (strain ATCC 42149 / RIB 40) (Yellow koji mold).